A 142-amino-acid chain; its full sequence is Small ribosomal subunit protein uS12 (142 aa).

The interval 1–43 is disordered; the sequence is MPTFNQLVRKGRKVIEKKSNSPALQKGFNSKKKKPTDVNSPQK. Asp102 is subject to 3-methylthioaspartic acid.

It belongs to the universal ribosomal protein uS12 family. In terms of assembly, part of the 30S ribosomal subunit. Contacts proteins S8 and S17. May interact with IF1 in the 30S initiation complex.

Its function is as follows. With S4 and S5 plays an important role in translational accuracy. In terms of biological role, interacts with and stabilizes bases of the 16S rRNA that are involved in tRNA selection in the A site and with the mRNA backbone. Located at the interface of the 30S and 50S subunits, it traverses the body of the 30S subunit contacting proteins on the other side and probably holding the rRNA structure together. The combined cluster of proteins S8, S12 and S17 appears to hold together the shoulder and platform of the 30S subunit. The protein is Small ribosomal subunit protein uS12 of Ruminiclostridium cellulolyticum (strain ATCC 35319 / DSM 5812 / JCM 6584 / H10) (Clostridium cellulolyticum).